The sequence spans 664 residues: Protein LYK5 (664 aa).

An N-terminal signal peptide occupies residues 1-26; sequence MAACTLHALSVTLFLLLFFAVSPAKA. At 27–277 the chain is on the extracellular side; sequence QQPYVNNHQL…DPPGSSSSHK (251 aa). 5 N-linked (GlcNAc...) asparagine glycosylation sites follow: Asn-45, Asn-81, Asn-111, Asn-125, and Asn-129. Disulfide bonds link Cys-52/Cys-114, Cys-58/Cys-181, and Cys-112/Cys-179. 135–141 provides a ligand contact to chitin; it reads GDETYFS. Asn-144 is a glycosylation site (N-linked (GlcNAc...) asparagine). 164-170 contacts chitin; sequence ERQLTPG. Residues 195 to 238 form the LysM domain; it reads LTYLVAMGDSISGIAEMFNSTSAAITEGNELTSDNIFFFTPVLV. Asn-213 carries N-linked (GlcNAc...) asparagine glycosylation. Residues 251–269 are compositionally biased toward pro residues; that stretch reads PSPPPPPVVATPPQTPVDP. Residues 251-270 form a disordered region; that stretch reads PSPPPPPVVATPPQTPVDPP. Residues 278-298 form a helical membrane-spanning segment; that stretch reads WIYIGIGIGAGLLLLLSILAL. Residues 299–664 lie on the Cytoplasmic side of the membrane; the sequence is CFYKRRSKKK…DLLRSGSLGN (366 aa). The Protein kinase domain occupies 351 to 643; that stretch reads KSAIESLTLY…TQVLTTLSMI (293 aa). ATP-binding positions include 357-365 and Lys-395; that span reads LTLYRFNDL.

It belongs to the protein kinase superfamily. Ser/Thr protein kinase family.

The protein localises to the cell membrane. Functionally, may recognize microbe-derived N-acetylglucosamine (NAG)-containing ligands. This Arabidopsis thaliana (Mouse-ear cress) protein is Protein LYK5 (LYK5).